The sequence spans 154 residues: Endoribonuclease YbeY (154 aa).

The Zn(2+) site is built by histidine 114, histidine 118, and histidine 124.

This sequence belongs to the endoribonuclease YbeY family. It depends on Zn(2+) as a cofactor.

It localises to the cytoplasm. Functionally, single strand-specific metallo-endoribonuclease involved in late-stage 70S ribosome quality control and in maturation of the 3' terminus of the 16S rRNA. This chain is Endoribonuclease YbeY, found in Haemophilus influenzae (strain 86-028NP).